The primary structure comprises 279 residues: Undecaprenyl-diphosphatase (279 aa).

A run of 7 helical transmembrane segments spans residues 10–30 (FICF…FLPI), 48–68 (LGVS…IYYF), 96–116 (LFLY…LIKL), 128–148 (GLFS…LSEI), 203–223 (SFLV…FSLF), 229–249 (IDII…IFAI), and 259–279 (NNTL…LTTL).

This sequence belongs to the UppP family.

Its subcellular location is the cell inner membrane. It catalyses the reaction di-trans,octa-cis-undecaprenyl diphosphate + H2O = di-trans,octa-cis-undecaprenyl phosphate + phosphate + H(+). Functionally, catalyzes the dephosphorylation of undecaprenyl diphosphate (UPP). Confers resistance to bacitracin. The polypeptide is Undecaprenyl-diphosphatase (Prochlorococcus marinus (strain NATL2A)).